The primary structure comprises 229 residues: Uracil-DNA glycosylase (229 aa).

Asp-67 functions as the Proton acceptor in the catalytic mechanism.

The protein belongs to the uracil-DNA glycosylase (UDG) superfamily. UNG family.

It is found in the cytoplasm. It catalyses the reaction Hydrolyzes single-stranded DNA or mismatched double-stranded DNA and polynucleotides, releasing free uracil.. Functionally, excises uracil residues from the DNA which can arise as a result of misincorporation of dUMP residues by DNA polymerase or due to deamination of cytosine. This is Uracil-DNA glycosylase from Coxiella burnetii (strain CbuK_Q154) (Coxiella burnetii (strain Q154)).